A 183-amino-acid polypeptide reads, in one-letter code: Ribulose bisphosphate carboxylase small subunit, chloroplastic 4 (183 aa).

A chloroplast-targeting transit peptide spans 1-57 (MASSLMSNAATTMAAATTTAQANMVAPFNGLKSISAFPVTRKNNDITSVASNGGRVQ).

Belongs to the RuBisCO small chain family. Heterohexadecamer of 8 large and 8 small subunits.

The protein localises to the plastid. The protein resides in the chloroplast. Functionally, ruBisCO catalyzes two reactions: the carboxylation of D-ribulose 1,5-bisphosphate, the primary event in carbon dioxide fixation, as well as the oxidative fragmentation of the pentose substrate. Both reactions occur simultaneously and in competition at the same active site. Although the small subunit is not catalytic it is essential for maximal activity. This Mesembryanthemum crystallinum (Common ice plant) protein is Ribulose bisphosphate carboxylase small subunit, chloroplastic 4.